The primary structure comprises 478 residues: Protein nucleotidyltransferase YdiU (478 aa).

8 residues coordinate ATP: Gly-84, Gly-86, Arg-87, Lys-107, Asp-119, Gly-120, Arg-170, and Arg-177. Asp-246 functions as the Proton acceptor in the catalytic mechanism. 2 residues coordinate Mg(2+): Asn-247 and Asp-256. Asp-256 lines the ATP pocket.

This sequence belongs to the SELO family. Mg(2+) is required as a cofactor. Mn(2+) serves as cofactor.

The enzyme catalyses L-seryl-[protein] + ATP = 3-O-(5'-adenylyl)-L-seryl-[protein] + diphosphate. It catalyses the reaction L-threonyl-[protein] + ATP = 3-O-(5'-adenylyl)-L-threonyl-[protein] + diphosphate. It carries out the reaction L-tyrosyl-[protein] + ATP = O-(5'-adenylyl)-L-tyrosyl-[protein] + diphosphate. The catalysed reaction is L-histidyl-[protein] + UTP = N(tele)-(5'-uridylyl)-L-histidyl-[protein] + diphosphate. The enzyme catalyses L-seryl-[protein] + UTP = O-(5'-uridylyl)-L-seryl-[protein] + diphosphate. It catalyses the reaction L-tyrosyl-[protein] + UTP = O-(5'-uridylyl)-L-tyrosyl-[protein] + diphosphate. Functionally, nucleotidyltransferase involved in the post-translational modification of proteins. It can catalyze the addition of adenosine monophosphate (AMP) or uridine monophosphate (UMP) to a protein, resulting in modifications known as AMPylation and UMPylation. This chain is Protein nucleotidyltransferase YdiU, found in Escherichia coli O157:H7.